An 85-amino-acid polypeptide reads, in one-letter code: Large ribosomal subunit protein bL27 (85 aa).

The tract at residues 1–22 (MAHKKAGGSTKNGRDSESKRLG) is disordered.

It belongs to the bacterial ribosomal protein bL27 family.

This Idiomarina loihiensis (strain ATCC BAA-735 / DSM 15497 / L2-TR) protein is Large ribosomal subunit protein bL27.